A 439-amino-acid chain; its full sequence is ATP-dependent protease ATPase subunit HslU (439 aa).

ATP contacts are provided by residues Ile17, Gly59–Glu64, Asp251, Glu317, and Arg389.

Belongs to the ClpX chaperone family. HslU subfamily. As to quaternary structure, a double ring-shaped homohexamer of HslV is capped on each side by a ring-shaped HslU homohexamer. The assembly of the HslU/HslV complex is dependent on binding of ATP.

The protein localises to the cytoplasm. Functionally, ATPase subunit of a proteasome-like degradation complex; this subunit has chaperone activity. The binding of ATP and its subsequent hydrolysis by HslU are essential for unfolding of protein substrates subsequently hydrolyzed by HslV. HslU recognizes the N-terminal part of its protein substrates and unfolds these before they are guided to HslV for hydrolysis. This chain is ATP-dependent protease ATPase subunit HslU, found in Campylobacter jejuni subsp. jejuni serotype O:23/36 (strain 81-176).